Here is a 334-residue protein sequence, read N- to C-terminus: MAGFYDIISPSNQHRPPVWLLRQVGRYMPQYQELKTNRPLKELFLDTESIIEATLLGPSLLGVDAAIVFTDILSILEGFAIEYRFAPGPEIIYSPHQPFVFTEDPFSTFSFLIEAIQKLTKRLTVPLIAFAASPFTLASYLIEGGASKDCSKTIAFLYQYPDKFEALLNEIIKGTAIYLQLQVQAGASAVQLFESSSLRLPPSLFSKYVVSPNAKLIRLIKQRENPPVSLFCRCFYQEFLSLYATGADTLHPDYHVELSEIYRQLGDPGSIQGNFDPALLLLPQDLLIAHLETYLAPLKQQSHYIFNLGHGILPQTPLENVQAVVKCLTSISTS.

Residues 22 to 26, D71, Y140, S195, and H310 each bind substrate; that span reads RQVGR.

This sequence belongs to the uroporphyrinogen decarboxylase family. As to quaternary structure, homodimer.

It is found in the cytoplasm. The catalysed reaction is uroporphyrinogen III + 4 H(+) = coproporphyrinogen III + 4 CO2. Its pathway is porphyrin-containing compound metabolism; protoporphyrin-IX biosynthesis; coproporphyrinogen-III from 5-aminolevulinate: step 4/4. Functionally, catalyzes the decarboxylation of four acetate groups of uroporphyrinogen-III to yield coproporphyrinogen-III. In Chlamydia muridarum (strain MoPn / Nigg), this protein is Uroporphyrinogen decarboxylase.